Here is a 149-residue protein sequence, read N- to C-terminus: Transcriptional repressor NrdR (149 aa).

Residues 3–34 (CPFCSENDTKVIDSRLVADGHQVRRRRQCLAC) fold into a zinc finger. One can recognise an ATP-cone domain in the interval 49–139 (PKVIKSNGNR…VYRSFEDIRE (91 aa)).

It belongs to the NrdR family. Requires Zn(2+) as cofactor.

Its function is as follows. Negatively regulates transcription of bacterial ribonucleotide reductase nrd genes and operons by binding to NrdR-boxes. This Vibrio atlanticus (strain LGP32) (Vibrio splendidus (strain Mel32)) protein is Transcriptional repressor NrdR.